We begin with the raw amino-acid sequence, 340 residues long: MSNIKILCAGNPLLDLSTHVEMAILDKYELKLGNAILAEDKHLPLYGEIKSGKVEYIPGGAAQNTSRVCQWMLKDKQTVCYTGCVGTDENATILKTATESNGVVTKYQVDSSAPTGACAVLINHKERSMVTNLGAANNFKIAHFQTEEMKAIVNSAQFFYLVGYFLTVSPDSAVHLGKHAAENDKPFLYGLAAPFLIDFFFDKVSELLPYVDIVFANESEAATLGRKMNWGEDLTVIAEKLAAWEKVNTKRTRTVVFTQGPDATLVFQNGVLTKYNPIKVATEDILDLNAAGDSFCGGFLAAYSNGQEIAKCVEAGHYASWEIIRQNGATVPASEPKIQF.

Asp-293 is a catalytic residue.

The protein belongs to the carbohydrate kinase PfkB family. As to quaternary structure, monomer. It depends on Mg(2+) as a cofactor.

It carries out the reaction adenosine + ATP = AMP + ADP + H(+). It functions in the pathway purine metabolism; AMP biosynthesis via salvage pathway; AMP from adenosine: step 1/1. In terms of biological role, ATP dependent phosphorylation of adenosine and other related nucleoside analogs to monophosphate derivatives. The sequence is that of Adenosine kinase (adk) from Dictyostelium discoideum (Social amoeba).